The primary structure comprises 1067 residues: DNA-directed RNA polymerase subunit beta (1067 aa).

It belongs to the RNA polymerase beta chain family. As to quaternary structure, in plastids the minimal PEP RNA polymerase catalytic core is composed of four subunits: alpha, beta, beta', and beta''. When a (nuclear-encoded) sigma factor is associated with the core the holoenzyme is formed, which can initiate transcription.

It localises to the plastid. The protein localises to the chloroplast. It carries out the reaction RNA(n) + a ribonucleoside 5'-triphosphate = RNA(n+1) + diphosphate. In terms of biological role, DNA-dependent RNA polymerase catalyzes the transcription of DNA into RNA using the four ribonucleoside triphosphates as substrates. This chain is DNA-directed RNA polymerase subunit beta, found in Ipomoea purpurea (Common morning glory).